The primary structure comprises 354 residues: Holliday junction branch migration complex subunit RuvB (354 aa).

Residues 4–190 (TDKLAAERII…FGIVARLEFY (187 aa)) form a large ATPase domain (RuvB-L) region. Residues Leu29, Arg30, Gly71, Lys74, Thr75, Thr76, 137-139 (EDY), Arg180, Tyr190, and Arg227 each bind ATP. Thr75 contacts Mg(2+). Positions 191 to 261 (NAEELARIVT…VADAALKMLD (71 aa)) are small ATPAse domain (RuvB-S). Positions 264–354 (AVGFDLMDRK…LPGLWDSAAT (91 aa)) are head domain (RuvB-H). DNA contacts are provided by Arg300, Arg319, and Arg324.

It belongs to the RuvB family. In terms of assembly, homohexamer. Forms an RuvA(8)-RuvB(12)-Holliday junction (HJ) complex. HJ DNA is sandwiched between 2 RuvA tetramers; dsDNA enters through RuvA and exits via RuvB. An RuvB hexamer assembles on each DNA strand where it exits the tetramer. Each RuvB hexamer is contacted by two RuvA subunits (via domain III) on 2 adjacent RuvB subunits; this complex drives branch migration. In the full resolvosome a probable DNA-RuvA(4)-RuvB(12)-RuvC(2) complex forms which resolves the HJ.

It is found in the cytoplasm. It carries out the reaction ATP + H2O = ADP + phosphate + H(+). Its function is as follows. The RuvA-RuvB-RuvC complex processes Holliday junction (HJ) DNA during genetic recombination and DNA repair, while the RuvA-RuvB complex plays an important role in the rescue of blocked DNA replication forks via replication fork reversal (RFR). RuvA specifically binds to HJ cruciform DNA, conferring on it an open structure. The RuvB hexamer acts as an ATP-dependent pump, pulling dsDNA into and through the RuvAB complex. RuvB forms 2 homohexamers on either side of HJ DNA bound by 1 or 2 RuvA tetramers; 4 subunits per hexamer contact DNA at a time. Coordinated motions by a converter formed by DNA-disengaged RuvB subunits stimulates ATP hydrolysis and nucleotide exchange. Immobilization of the converter enables RuvB to convert the ATP-contained energy into a lever motion, pulling 2 nucleotides of DNA out of the RuvA tetramer per ATP hydrolyzed, thus driving DNA branch migration. The RuvB motors rotate together with the DNA substrate, which together with the progressing nucleotide cycle form the mechanistic basis for DNA recombination by continuous HJ branch migration. Branch migration allows RuvC to scan DNA until it finds its consensus sequence, where it cleaves and resolves cruciform DNA. This is Holliday junction branch migration complex subunit RuvB from Paraburkholderia phytofirmans (strain DSM 17436 / LMG 22146 / PsJN) (Burkholderia phytofirmans).